The primary structure comprises 377 residues: Glutamate 5-kinase (377 aa).

Residue lysine 15 participates in ATP binding. The substrate site is built by serine 56, aspartate 143, and asparagine 155. 175 to 176 (SD) contacts ATP. The PUA domain occupies 281–358 (KGTLTIDAGA…PDVLIILGIS (78 aa)).

The protein belongs to the glutamate 5-kinase family.

It is found in the cytoplasm. It catalyses the reaction L-glutamate + ATP = L-glutamyl 5-phosphate + ADP. The protein operates within amino-acid biosynthesis; L-proline biosynthesis; L-glutamate 5-semialdehyde from L-glutamate: step 1/2. Catalyzes the transfer of a phosphate group to glutamate to form L-glutamate 5-phosphate. This is Glutamate 5-kinase from Rhodopseudomonas palustris (strain BisA53).